A 222-amino-acid polypeptide reads, in one-letter code: GTP cyclohydrolase 1 (222 aa).

Residues C111, H114, and C182 each contribute to the Zn(2+) site.

Belongs to the GTP cyclohydrolase I family. As to quaternary structure, homomer.

The catalysed reaction is GTP + H2O = 7,8-dihydroneopterin 3'-triphosphate + formate + H(+). The protein operates within cofactor biosynthesis; 7,8-dihydroneopterin triphosphate biosynthesis; 7,8-dihydroneopterin triphosphate from GTP: step 1/1. This chain is GTP cyclohydrolase 1, found in Shigella boydii serotype 18 (strain CDC 3083-94 / BS512).